A 196-amino-acid chain; its full sequence is Large ribosomal subunit protein eL15 (196 aa).

The interval 155–196 (THRGRAERGLTSAGKKGRGQRRKGKGTEKNYPSVQAHDRRGK) is disordered. Positions 169-178 (KKGRGQRRKG) are enriched in basic residues.

This sequence belongs to the eukaryotic ribosomal protein eL15 family.

This chain is Large ribosomal subunit protein eL15, found in Methanocella arvoryzae (strain DSM 22066 / NBRC 105507 / MRE50).